We begin with the raw amino-acid sequence, 560 residues long: Platelet glycoprotein V (560 aa).

Positions 1–16 are cleaved as a signal peptide; sequence MLRGTLLCAVLGLLRA. The region spanning 17–50 is the LRRNT domain; sequence QPFPCPPACKCVFRDAAQCSGGDVARISALGLPT. At 17–523 the chain is on the extracellular side; sequence QPFPCPPACK…KGQDHSPFWG (507 aa). The N-linked (GlcNAc...) asparagine glycan is linked to asparagine 51. 13 LRR repeats span residues 75-96, 99-120, 123-144, 147-168, 171-193, 195-216, 219-240, 243-264, 267-288, 291-312, 340-361, 364-385, and 388-409; these read VLQRLMISDSHISAVAPGTFSD, KLKTLRLSRNKITHLPGALLDK, LLEQLFLDHNALRGIDQNMFQK, NLQELALNQNQLDFLPASLFTN, NLKLLDLSGNNLTHLPKGLLGAQ, KLERLLLHSNRLVSLDSGLLNS, ALTELQFHRNHIRSIAPGAFDR, NLSSLTLSRNHLAFLPSALFLH, NLTLLTLFENPLAELPGVLFGE, GLQELWLNRTQLRTLPAAAFRN, ELQVLALHSNGLTALPDGLLRG, KLRQVSLRRNRLRALPRALFRN, and SLESVQLDHNQLETLPGDVFGA. N-linked (GlcNAc...) (complex) asparagine glycosylation occurs at asparagine 181. Asparagine 243 is a glycosylation site (N-linked (GlcNAc...) (complex) asparagine). 3 N-linked (GlcNAc...) asparagine glycosylation sites follow: asparagine 267, asparagine 298, and asparagine 312. Asparagine 385 carries N-linked (GlcNAc...) asparagine glycosylation. An LRRCT domain is found at 421-474; it reads NSWRCDCGLGPFLGWLRQHLGLVGGEEPPRCAGPGAHAGLPLWALPGGDAECPG. The tract at residues 469-498 is disordered; the sequence is DAECPGPRGPPPRPAADSSSEAPVHPALAP. Asparagine 499 carries N-linked (GlcNAc...) asparagine glycosylation. A helical transmembrane segment spans residues 524–544; the sequence is FYFLLLAVQAMITVIIVFAMI. The Cytoplasmic segment spans residues 545 to 560; it reads KIGQLFRKLIRERALG.

The N-terminus is blocked. As to expression, platelets and megakaryocytes.

The protein resides in the membrane. The GPIb-V-IX complex functions as the vWF receptor and mediates vWF-dependent platelet adhesion to blood vessels. The adhesion of platelets to injured vascular surfaces in the arterial circulation is a critical initiating event in hemostasis. The chain is Platelet glycoprotein V (GP5) from Homo sapiens (Human).